The following is a 196-amino-acid chain: Penicillin-binding protein activator LpoB (196 aa).

A signal peptide spans methionine 1–glycine 16. The N-palmitoyl cysteine moiety is linked to residue cysteine 17. Cysteine 17 carries S-diacylglycerol cysteine lipidation. Residues threonine 24 to proline 54 are disordered. Positions valine 34–proline 43 are enriched in pro residues.

The protein belongs to the LpoB family. As to quaternary structure, interacts with PBP1b.

It is found in the cell outer membrane. Regulator of peptidoglycan synthesis that is essential for the function of penicillin-binding protein 1B (PBP1b). The protein is Penicillin-binding protein activator LpoB of Dickeya dadantii (strain 3937) (Erwinia chrysanthemi (strain 3937)).